Consider the following 123-residue polypeptide: Small ribosomal subunit protein uS12 (123 aa).

At Asp-89 the chain carries 3-methylthioaspartic acid.

This sequence belongs to the universal ribosomal protein uS12 family. As to quaternary structure, part of the 30S ribosomal subunit. Contacts proteins S8 and S17. May interact with IF1 in the 30S initiation complex.

In terms of biological role, with S4 and S5 plays an important role in translational accuracy. Interacts with and stabilizes bases of the 16S rRNA that are involved in tRNA selection in the A site and with the mRNA backbone. Located at the interface of the 30S and 50S subunits, it traverses the body of the 30S subunit contacting proteins on the other side and probably holding the rRNA structure together. The combined cluster of proteins S8, S12 and S17 appears to hold together the shoulder and platform of the 30S subunit. In Orientia tsutsugamushi (strain Boryong) (Rickettsia tsutsugamushi), this protein is Small ribosomal subunit protein uS12.